We begin with the raw amino-acid sequence, 418 residues long: Voltage-gated ClC-type chloride channel ClcB (418 aa).

The next 10 membrane-spanning stretches (helical) occupy residues Leu-5–Ala-25, Leu-54–Phe-74, Leu-146–Gly-166, Leu-168–Ile-188, Ala-222–Met-242, Trp-258–Trp-278, Ala-291–Ala-311, Gly-316–Tyr-336, Leu-352–Met-372, and Met-380–Ile-400.

Belongs to the chloride channel (TC 2.A.49) family. ClcB subfamily.

The protein localises to the cell inner membrane. Probably acts as an electrical shunt for an outwardly-directed proton pump that is linked to amino acid decarboxylation, as part of the extreme acid resistance (XAR) response. The protein is Voltage-gated ClC-type chloride channel ClcB of Shigella boydii serotype 18 (strain CDC 3083-94 / BS512).